The following is a 239-amino-acid chain: Endonuclease V (239 aa).

The Mg(2+) site is built by D48 and D116.

This sequence belongs to the endonuclease V family. Mg(2+) serves as cofactor.

The protein resides in the cytoplasm. It carries out the reaction Endonucleolytic cleavage at apurinic or apyrimidinic sites to products with a 5'-phosphate.. In terms of biological role, DNA repair enzyme involved in the repair of deaminated bases. Selectively cleaves double-stranded DNA at the second phosphodiester bond 3' to a deoxyinosine leaving behind the intact lesion on the nicked DNA. This chain is Endonuclease V, found in Xanthomonas oryzae pv. oryzae (strain MAFF 311018).